Consider the following 107-residue polypeptide: Replication restart protein PriB (107 aa).

The region spanning 8–107 (IENRLSLIGV…LHAEHIELLD (100 aa)) is the SSB domain.

The protein belongs to the PriB family. As to quaternary structure, homodimer. Interacts with PriA and DnaT. Component of the replication restart primosome. Primosome assembly occurs via a 'hand-off' mechanism. PriA binds to replication forks, subsequently PriB then DnaT bind; DnaT then displaces ssDNA to generate the helicase loading substrate.

Its function is as follows. Involved in the restart of stalled replication forks, which reloads the replicative helicase on sites other than the origin of replication; the PriA-PriB pathway is the major replication restart pathway. During primosome assembly it facilitates complex formation between PriA and DnaT on DNA; stabilizes PriA on DNA. Stimulates the DNA unwinding activity of PriA helicase. The polypeptide is Replication restart protein PriB (Actinobacillus succinogenes (strain ATCC 55618 / DSM 22257 / CCUG 43843 / 130Z)).